The following is a 504-amino-acid chain: Maturase K (504 aa).

It belongs to the intron maturase 2 family. MatK subfamily.

Its subcellular location is the plastid. It is found in the chloroplast. In terms of biological role, usually encoded in the trnK tRNA gene intron. Probably assists in splicing its own and other chloroplast group II introns. This Berzelia lanuginosa (Buttonbush) protein is Maturase K.